The chain runs to 341 residues: tRNA (guanine-N(7)-)-methyltransferase (341 aa).

Residues glutamate 75, glutamate 100, aspartate 127, and aspartate 150 each coordinate S-adenosyl-L-methionine. Residue aspartate 150 is part of the active site. Substrate is bound at residue lysine 154. The segment at 156 to 161 is interaction with RNA; it reads RHNKRR. Aspartate 186 serves as a coordination point for substrate.

It belongs to the class I-like SAM-binding methyltransferase superfamily. TrmB family.

It carries out the reaction guanosine(46) in tRNA + S-adenosyl-L-methionine = N(7)-methylguanosine(46) in tRNA + S-adenosyl-L-homocysteine. It functions in the pathway tRNA modification; N(7)-methylguanine-tRNA biosynthesis. In terms of biological role, catalyzes the formation of N(7)-methylguanine at position 46 (m7G46) in tRNA. In Xanthomonas euvesicatoria pv. vesicatoria (strain 85-10) (Xanthomonas campestris pv. vesicatoria), this protein is tRNA (guanine-N(7)-)-methyltransferase.